A 263-amino-acid chain; its full sequence is Hydroxyethylthiazole kinase (263 aa).

A substrate-binding site is contributed by Met-41. ATP is bound by residues Arg-117 and Thr-163. A substrate-binding site is contributed by Gly-190.

The protein belongs to the Thz kinase family. The cofactor is Mg(2+).

It carries out the reaction 5-(2-hydroxyethyl)-4-methylthiazole + ATP = 4-methyl-5-(2-phosphooxyethyl)-thiazole + ADP + H(+). The protein operates within cofactor biosynthesis; thiamine diphosphate biosynthesis; 4-methyl-5-(2-phosphoethyl)-thiazole from 5-(2-hydroxyethyl)-4-methylthiazole: step 1/1. In terms of biological role, catalyzes the phosphorylation of the hydroxyl group of 4-methyl-5-beta-hydroxyethylthiazole (THZ). This chain is Hydroxyethylthiazole kinase, found in Exiguobacterium sp. (strain ATCC BAA-1283 / AT1b).